We begin with the raw amino-acid sequence, 430 residues long: Histidine--tRNA ligase (430 aa).

This sequence belongs to the class-II aminoacyl-tRNA synthetase family. Homodimer.

Its subcellular location is the cytoplasm. It carries out the reaction tRNA(His) + L-histidine + ATP = L-histidyl-tRNA(His) + AMP + diphosphate + H(+). This Acinetobacter baumannii (strain SDF) protein is Histidine--tRNA ligase.